The following is a 337-amino-acid chain: DNA-directed RNA polymerase subunit alpha (337 aa).

Positions 1–233 (MVREKVKVST…NLFIPFLHVE (233 aa)) are alpha N-terminal domain (alpha-NTD). The alpha C-terminal domain (alpha-CTD) stretch occupies residues 267 to 337 (LAFQYIFIDQ…IEKAFQKKID (71 aa)).

Belongs to the RNA polymerase alpha chain family. In plastids the minimal PEP RNA polymerase catalytic core is composed of four subunits: alpha, beta, beta', and beta''. When a (nuclear-encoded) sigma factor is associated with the core the holoenzyme is formed, which can initiate transcription.

The protein localises to the plastid. Its subcellular location is the chloroplast. It catalyses the reaction RNA(n) + a ribonucleoside 5'-triphosphate = RNA(n+1) + diphosphate. Functionally, DNA-dependent RNA polymerase catalyzes the transcription of DNA into RNA using the four ribonucleoside triphosphates as substrates. The protein is DNA-directed RNA polymerase subunit alpha of Arabis hirsuta (Hairy rock-cress).